A 377-amino-acid polypeptide reads, in one-letter code: Probable pectin lyase D (377 aa).

An N-terminal signal peptide occupies residues 1–17; it reads MRVSAFALLAAAATAAA. Intrachain disulfides connect Cys80–Cys99 and Cys89–Cys223. N-linked (GlcNAc...) asparagine glycosylation occurs at Asn126. Arg253 is a catalytic residue. Cys321 and Cys329 are oxidised to a cystine.

It belongs to the polysaccharide lyase 1 family.

The protein resides in the secreted. It carries out the reaction Eliminative cleavage of (1-&gt;4)-alpha-D-galacturonan methyl ester to give oligosaccharides with 4-deoxy-6-O-methyl-alpha-D-galact-4-enuronosyl groups at their non-reducing ends.. Its function is as follows. Pectinolytic enzymes consist of four classes of enzymes: pectin lyase, polygalacturonase, pectin methylesterase and rhamnogalacturonase. Among pectinolytic enzymes, pectin lyase is the most important in depolymerization of pectin, since it cleaves internal glycosidic bonds of highly methylated pectins. In Emericella nidulans (strain FGSC A4 / ATCC 38163 / CBS 112.46 / NRRL 194 / M139) (Aspergillus nidulans), this protein is Probable pectin lyase D (pelD).